Here is a 144-residue protein sequence, read N- to C-terminus: Flagellar assembly factor FliW (144 aa).

This sequence belongs to the FliW family. Interacts with translational regulator CsrA and flagellin(s).

Its subcellular location is the cytoplasm. Functionally, acts as an anti-CsrA protein, binds CsrA and prevents it from repressing translation of its target genes, one of which is flagellin. Binds to flagellin and participates in the assembly of the flagellum. The polypeptide is Flagellar assembly factor FliW (Geobacillus sp. (strain WCH70)).